Consider the following 176-residue polypeptide: MDLPGLIHDFLLVFLGLGLILGGLGVVLLANPIYSAFSLGLVFVCISLFYILANSHFVAAAQLLIYVGAINVLIIFAVMFINGSEYSKDFHLWTVGDGVTSVVCTSLFVSLITTIPDTSWYGIIWTTKANQIIEQDLISNSQQIGIHLSTDFFLPFEFISIILLVALIGAIAVARQ.

A run of 5 helical transmembrane segments spans residues 10-30, 33-53, 61-81, 92-112, and 152-172; these read FLLV…VLLA, IYSA…YILA, AQLL…VMFI, LWTV…VSLI, and FFLP…GAIA.

Belongs to the complex I subunit 6 family. NDH is composed of at least 16 different subunits, 5 of which are encoded in the nucleus.

It is found in the plastid. Its subcellular location is the chloroplast thylakoid membrane. It catalyses the reaction a plastoquinone + NADH + (n+1) H(+)(in) = a plastoquinol + NAD(+) + n H(+)(out). The catalysed reaction is a plastoquinone + NADPH + (n+1) H(+)(in) = a plastoquinol + NADP(+) + n H(+)(out). NDH shuttles electrons from NAD(P)H:plastoquinone, via FMN and iron-sulfur (Fe-S) centers, to quinones in the photosynthetic chain and possibly in a chloroplast respiratory chain. The immediate electron acceptor for the enzyme in this species is believed to be plastoquinone. Couples the redox reaction to proton translocation, and thus conserves the redox energy in a proton gradient. This chain is NAD(P)H-quinone oxidoreductase subunit 6, chloroplastic (ndhG), found in Guizotia abyssinica (Niger).